A 375-amino-acid chain; its full sequence is Putative disease resistance protein At3g15700 (375 aa).

Residues 17–49 (KENDNVKKLKTATEELKDLRNIVMKRVKMYEDQ) adopt a coiled-coil conformation. In terms of domain architecture, NB-ARC spans 158–372 (DNTGIIGLYG…LSTSPPNFSG (215 aa)). 167–174 (GVEGVGKT) contributes to the ATP binding site.

In terms of biological role, potential disease resistance protein. The polypeptide is Putative disease resistance protein At3g15700 (Arabidopsis thaliana (Mouse-ear cress)).